The chain runs to 167 residues: Putative C-type lectin protein FPV008/FPV253 (167 aa).

Residues 49 to 152 (CPDEWIGYNS…SCIFHERTIC (104 aa)) enclose the C-type lectin domain. 2 cysteine pairs are disulfide-bonded: C77-C152 and C131-C144.

This chain is Putative C-type lectin protein FPV008/FPV253, found in Vertebrata (FPV).